We begin with the raw amino-acid sequence, 61 residues long: Ferredoxin-2 (61 aa).

4Fe-4S ferredoxin-type domains are found at residues 2 to 27 (HRITEECTYCAACEPECPVNAISAGD) and 28 to 61 (EIYIVDESVCTDCEGYYDEPACVAVCPVDCIIKV). Positions 8, 11, 14, 18, 37, 40, 49, and 53 each coordinate [4Fe-4S] cluster.

[4Fe-4S] cluster serves as cofactor.

Its function is as follows. Ferredoxins are iron-sulfur proteins that transfer electrons in a wide variety of metabolic reactions. This is Ferredoxin-2 from Chlorobium limicola.